Here is a 412-residue protein sequence, read N- to C-terminus: Branched-chain alpha-ketoacid dehydrogenase kinase (412 aa).

The N-terminal 30 residues, 1-30, are a transit peptide targeting the mitochondrion; the sequence is MILTSVLGSGPRSGSSLWPLLGSSLSLRVR. Serine 31 carries the phosphoserine modification. One can recognise a Histidine kinase domain in the interval 159–404; the sequence is LDDHKDVVTL…DVYLRLRHID (246 aa). An N6-acetyllysine mark is found at lysine 192 and lysine 233. 2 residues coordinate ATP: asparagine 279 and aspartate 315. Asparagine 279 contributes to the Mg(2+) binding site. K(+) contacts are provided by valine 328, aspartate 330, and phenylalanine 333. 2 residues coordinate ATP: threonine 334 and threonine 335. 2 positions are modified to phosphoserine: serine 356 and serine 360. ATP-binding residues include histidine 364, glycine 367, and leucine 370. Residue glycine 367 coordinates K(+).

This sequence belongs to the PDK/BCKDK protein kinase family. In terms of assembly, homodimer. Homotetramer. Dimerizes through interaction of two opposing nucleotide-binding domains. Interacts with E2 component of the branched-chain alpha-ketoacid dehydrogenase (BCKDH) complex. Competes with BCKDK for binding to the E2 component; this interaction is modulated by branched-chain alpha-keto acids. At steady state, BCKDH holoenzyme contains BCKDK and BCKDHA is phosphorylated. In response to high levels of branched-chain alpha-keto acids, the inhibitory BCKDK is replaced by activating PPM1K leading to BCKDHA dephosphorylation and BCAA degradation. Post-translationally, autophosphorylated. In terms of tissue distribution, expressed in heart and liver.

The protein localises to the mitochondrion matrix. The protein resides in the mitochondrion. The enzyme catalyses L-seryl-[3-methyl-2-oxobutanoate dehydrogenase] + ATP = O-phospho-L-seryl-[3-methyl-2-oxobutanoate dehydrogenase] + ADP + H(+). It carries out the reaction L-seryl-[protein] + ATP = O-phospho-L-seryl-[protein] + ADP + H(+). Its activity is regulated as follows. The ATP-ase activity is up-regulated by potassium and rubidium ions but not by sodium ions. Up-regulated in the presence of apo- or lipoylated-DBT/E2b subunit of the BCKDH complex. Functionally, serine/threonine-protein kinase component of macronutrients metabolism. Forms a functional kinase and phosphatase pair with PPM1K, serving as a metabolic regulatory node that coordinates branched-chain amino acids (BCAAs) with glucose and lipid metabolism via two distinct phosphoprotein targets: mitochondrial BCKDHA subunit of the branched-chain alpha-ketoacid dehydrogenase (BCKDH) complex and cytosolic ACLY, a lipogenic enzyme of Krebs cycle. Phosphorylates and inactivates mitochondrial BCKDH complex a multisubunit complex consisting of three multimeric components each involved in different steps of BCAA catabolism: E1 composed of BCKDHA and BCKDHB, E2 core composed of DBT monomers, and E3 composed of DLD monomers. Associates with the E2 component of BCKDH complex and phosphorylates BCKDHA on Ser-333, leading to conformational changes that interrupt substrate channeling between E1 and E2 and inactivates the BCKDH complex. phosphorylates ACLY on Ser-455 in response to changes in cellular carbohydrate abundance such as occurs during fasting to feeding metabolic transition. Refeeding stimulates MLXIPL/ChREBP transcription factor, leading to increased BCKDK to PPM1K expression ratio, phosphorylation and activation of ACLY that ultimately results in the generation of malonyl-CoA and oxaloacetate immediate substrates of de novo lipogenesis and glucogenesis, respectively. Recognizes phosphosites having SxxE/D canonical motif. The polypeptide is Branched-chain alpha-ketoacid dehydrogenase kinase (Bckdk) (Rattus norvegicus (Rat)).